Reading from the N-terminus, the 340-residue chain is MAAPLLHTRLPGDAAASPSAVKMLGASRTGISNMRALENDFFNSPPRKTVQFGGTVTEVLLKYKTGETNDFELLKNQLLDPDIKDDQIINWLLEFRSSIMYLTKDFEQLISIILRLPWLNRSQTVVEEYLAFLGNLVSAQTVFLRPCLSMIASHFVPPRVIIKEGDVDVSDSDDEDDNLPANFDTSQSLANNSKICTIECYVHNLLRISVYFPTLRHEILELIIEKLLKLDVNASRQGIEDAEETANQTCGGTDSTEGLCNMGFAEAFLEPLWKKLQDPSNPAIIRQAAGNYIGSFLARAKFIPLMIREQRHSAMLLSMDHFTQPAKLCSTPLFLDTSSF.

The protein belongs to the RRN3 family.

This is Putative RRN3-like protein RRN3P2 (RRN3P2) from Homo sapiens (Human).